The chain runs to 537 residues: Leucine-rich repeat LGI family member 4 (537 aa).

An N-terminal signal peptide occupies residues Met-1–Ala-19. 4 LRR repeats span residues Thr-53–Arg-74, Ser-77–Gly-98, His-101–Gly-122, and Ser-125–Gly-146. The 51-residue stretch at Asn-158–Ala-208 folds into the LRRCT domain. Asn-177 is a glycosylation site (N-linked (GlcNAc...) asparagine). EAR repeat units follow at residues Glu-210–Tyr-252, Arg-256–Ser-298, Arg-302–Gly-349, Gly-351–Gly-394, Arg-396–Gly-439, Met-441–Pro-483, and Leu-487–Glu-532.

As to quaternary structure, can bind to ADAM11, ADAM22 and ADAM23. As to expression, widely expressed, with highest expression in brain.

The protein localises to the secreted. In terms of biological role, component of Schwann cell signaling pathway(s) that controls axon segregation and myelin formation. The polypeptide is Leucine-rich repeat LGI family member 4 (LGI4) (Homo sapiens (Human)).